We begin with the raw amino-acid sequence, 184 residues long: GMP synthase [glutamine-hydrolyzing] subunit A (184 aa).

Residues 3-184 (RIVVVDNHGQ…ENFRDICAGD (182 aa)) form the Glutamine amidotransferase type-1 domain. Cysteine 73 acts as the Nucleophile in catalysis. Catalysis depends on residues histidine 161 and glutamate 163.

As to quaternary structure, heterodimer composed of a glutamine amidotransferase subunit (A) and a GMP-binding subunit (B).

The catalysed reaction is XMP + L-glutamine + ATP + H2O = GMP + L-glutamate + AMP + diphosphate + 2 H(+). It functions in the pathway purine metabolism; GMP biosynthesis; GMP from XMP (L-Gln route): step 1/1. Functionally, catalyzes the synthesis of GMP from XMP. This chain is GMP synthase [glutamine-hydrolyzing] subunit A, found in Natronomonas pharaonis (strain ATCC 35678 / DSM 2160 / CIP 103997 / JCM 8858 / NBRC 14720 / NCIMB 2260 / Gabara) (Halobacterium pharaonis).